The chain runs to 390 residues: Methylthioribose-1-phosphate isomerase (390 aa).

Residue D263 is the Proton donor of the active site.

The protein belongs to the eIF-2B alpha/beta/delta subunits family. MtnA subfamily.

The protein resides in the cytoplasm. It localises to the nucleus. It catalyses the reaction 5-(methylsulfanyl)-alpha-D-ribose 1-phosphate = 5-(methylsulfanyl)-D-ribulose 1-phosphate. Its pathway is amino-acid biosynthesis; L-methionine biosynthesis via salvage pathway; L-methionine from S-methyl-5-thio-alpha-D-ribose 1-phosphate: step 1/6. Catalyzes the interconversion of methylthioribose-1-phosphate (MTR-1-P) into methylthioribulose-1-phosphate (MTRu-1-P). The polypeptide is Methylthioribose-1-phosphate isomerase (Meyerozyma guilliermondii (strain ATCC 6260 / CBS 566 / DSM 6381 / JCM 1539 / NBRC 10279 / NRRL Y-324) (Yeast)).